The following is a 228-amino-acid chain: Cytochrome c oxidase subunit 2 (228 aa).

At 1–26 (MATWANLGLQDSSSPLMEQLNFFHDH) the chain is on the mitochondrial intermembrane side. A helical membrane pass occupies residues 27 to 48 (TLLILTMITILVGYIMGMLSFN). The Mitochondrial matrix segment spans residues 49–62 (KFTNRFLLHGQTIE). Residues 63–82 (IIWTVLPAIILMFIAFPSLR) form a helical membrane-spanning segment. Topologically, residues 83–228 (LLYLMDEINT…FIKWITSMTN (146 aa)) are mitochondrial intermembrane. Residues H161, C196, E198, C200, H204, and M207 each coordinate Cu cation. E198 serves as a coordination point for Mg(2+).

It belongs to the cytochrome c oxidase subunit 2 family. As to quaternary structure, component of the cytochrome c oxidase (complex IV, CIV), a multisubunit enzyme composed of a catalytic core of 3 subunits and several supernumerary subunits. The complex exists as a monomer or a dimer and forms supercomplexes (SCs) in the inner mitochondrial membrane with ubiquinol-cytochrome c oxidoreductase (cytochrome b-c1 complex, complex III, CIII). The cofactor is Cu cation.

It is found in the mitochondrion inner membrane. It carries out the reaction 4 Fe(II)-[cytochrome c] + O2 + 8 H(+)(in) = 4 Fe(III)-[cytochrome c] + 2 H2O + 4 H(+)(out). Functionally, component of the cytochrome c oxidase, the last enzyme in the mitochondrial electron transport chain which drives oxidative phosphorylation. The respiratory chain contains 3 multisubunit complexes succinate dehydrogenase (complex II, CII), ubiquinol-cytochrome c oxidoreductase (cytochrome b-c1 complex, complex III, CIII) and cytochrome c oxidase (complex IV, CIV), that cooperate to transfer electrons derived from NADH and succinate to molecular oxygen, creating an electrochemical gradient over the inner membrane that drives transmembrane transport and the ATP synthase. Cytochrome c oxidase is the component of the respiratory chain that catalyzes the reduction of oxygen to water. Electrons originating from reduced cytochrome c in the intermembrane space (IMS) are transferred via the dinuclear copper A center (CU(A)) of subunit 2 and heme A of subunit 1 to the active site in subunit 1, a binuclear center (BNC) formed by heme A3 and copper B (CU(B)). The BNC reduces molecular oxygen to 2 water molecules using 4 electrons from cytochrome c in the IMS and 4 protons from the mitochondrial matrix. The sequence is that of Cytochrome c oxidase subunit 2 (COII) from Anopheles gambiae (African malaria mosquito).